A 282-amino-acid polypeptide reads, in one-letter code: Formamidopyrimidine-DNA glycosylase (282 aa).

Pro-2 serves as the catalytic Schiff-base intermediate with DNA. Glu-3 (proton donor) is an active-site residue. The active-site Proton donor; for beta-elimination activity is Lys-61. Positions 93, 112, and 158 each coordinate DNA. The FPG-type zinc finger occupies 244 to 278 (DAYGREGEGCRRCGAVMHREKFMNRSSFYCPRCQP). Residue Arg-268 is the Proton donor; for delta-elimination activity of the active site.

The protein belongs to the FPG family. Monomer. It depends on Zn(2+) as a cofactor.

The enzyme catalyses Hydrolysis of DNA containing ring-opened 7-methylguanine residues, releasing 2,6-diamino-4-hydroxy-5-(N-methyl)formamidopyrimidine.. It carries out the reaction 2'-deoxyribonucleotide-(2'-deoxyribose 5'-phosphate)-2'-deoxyribonucleotide-DNA = a 3'-end 2'-deoxyribonucleotide-(2,3-dehydro-2,3-deoxyribose 5'-phosphate)-DNA + a 5'-end 5'-phospho-2'-deoxyribonucleoside-DNA + H(+). Functionally, involved in base excision repair of DNA damaged by oxidation or by mutagenic agents. Acts as a DNA glycosylase that recognizes and removes damaged bases. Has a preference for oxidized purines, such as 7,8-dihydro-8-oxoguanine (8-oxoG). Has AP (apurinic/apyrimidinic) lyase activity and introduces nicks in the DNA strand. Cleaves the DNA backbone by beta-delta elimination to generate a single-strand break at the site of the removed base with both 3'- and 5'-phosphates. This Mycobacterium leprae (strain Br4923) protein is Formamidopyrimidine-DNA glycosylase.